The chain runs to 358 residues: Snurportin-1 (358 aa).

Met1 is modified (N-acetylmethionine). Disordered regions lie at residues 1 to 26 (MEELSQALASSFSVSQELNSTAAPHP) and 69 to 90 (DWTGMESGEEENKKDEEEMDID). The interval 1 to 65 (MEELSQALAS…LDYVNHARRL (65 aa)) is necessary for interaction with KPNB1 and m3G-cap U1 and U5 snRNP import receptor activity. Positions 1–160 (MEELSQALAS…NRFSSLLPGG (160 aa)) are necessary for interaction with XPO1. Residues 7 to 22 (ALASSFSVSQELNSTA) show a composition bias toward polar residues. The IBB domain occupies 11 to 73 (SFSVSQELNS…RLAEDDWTGM (63 aa)). Ser75 is modified (phosphoserine). Positions 128 to 130 (GKR) are interaction with m3G-cap structure. Residues 210–329 (MHSKLPEEEG…DTKEKLTHKA (120 aa)) form a necessary for binding to the m3G-cap structure region. The span at 315–341 (KRSQEDTKEKLTHKASENGHYELEHLS) shows a compositional bias: basic and acidic residues. The segment at 315 to 358 (KRSQEDTKEKLTHKASENGHYELEHLSTPKLRNPPHSSESLMDN) is disordered. Residues 349–358 (PHSSESLMDN) show a composition bias toward polar residues. Ser351 carries the phosphoserine modification.

The protein belongs to the snurportin family. Component of an import snRNP complex composed of KPNB1, SNUPN, SMN1 and ZNF259. Component of a nuclear export receptor complex composed of KPNB1, Ran, SNUPN and XPO1. Found in a trimeric export complex with SNUPN, Ran and XPO1. Interacts (via IBB domain) with KPNB1; the interaction is direct. Interacts with DDX20, IPO7, SMN1, SNRPB and XPO1. Interacts directly with XPO1. Its interaction with XPO1 and binding to m3G-cap U snRNPs appears to be mutually exclusive. Can form homomers.

The protein resides in the nucleus. It is found in the cytoplasm. In terms of biological role, functions as an U snRNP-specific nuclear import adapter. Involved in the trimethylguanosine (m3G)-cap-dependent nuclear import of U snRNPs. Binds specifically to the terminal m3G-cap U snRNAs. The chain is Snurportin-1 (Snupn) from Mus musculus (Mouse).